We begin with the raw amino-acid sequence, 278 residues long: Cytidine kinase (278 aa).

ATP is bound at residue 203-208 (TRGEKG). Asp-237 serves as the catalytic Proton acceptor.

Belongs to the carbohydrate kinase PfkB family. It depends on Mg(2+) as a cofactor.

The enzyme catalyses cytidine + ATP = CMP + ADP + H(+). Involved in nucleoside degradation. Phosphorylates cytidine to CMP. Can also act on deoxycytidine and uridine, but is most active with cytidine. ATP is the most preferred phosphate donor, but it can also use GTP, CTP or UTP. The polypeptide is Cytidine kinase (Thermococcus kodakarensis (strain ATCC BAA-918 / JCM 12380 / KOD1) (Pyrococcus kodakaraensis (strain KOD1))).